Reading from the N-terminus, the 269-residue chain is Small ribosomal subunit protein uS2 (269 aa).

Residues 224–269 form a disordered region; sequence ANQGREDSEDVYSETENDTEETDEELVSEEDLKEFVENSEEESDEE. A compositionally biased stretch (acidic residues) spans 230-269; sequence DSEDVYSETENDTEETDEELVSEEDLKEFVENSEEESDEE.

The protein belongs to the universal ribosomal protein uS2 family.

In Finegoldia magna (strain ATCC 29328 / DSM 20472 / WAL 2508) (Peptostreptococcus magnus), this protein is Small ribosomal subunit protein uS2.